Reading from the N-terminus, the 307-residue chain is Taste receptor type 2 member 10 (307 aa).

Residues 1-6 lie on the Extracellular side of the membrane; sequence MLRVVE. A helical transmembrane segment spans residues 7 to 27; it reads GIFIFVVISESVFGVLGNGFI. Topologically, residues 28-42 are cytoplasmic; it reads GLVNCIDCAKNKLST. The helical transmembrane segment at 43–63 threads the bilayer; it reads IGFILTGLAISRIFLIWIIIT. Topologically, residues 64–100 are extracellular; sequence DGFIQIFSPNIYASSNLIEYISYFWVIGNQSSMWFAT. Residues 101-121 traverse the membrane as a helical segment; it reads SLSIFYFLKIANFSNYIFLWL. Topologically, residues 122–126 are cytoplasmic; it reads KSRTN. The helical transmembrane segment at 127-147 threads the bilayer; that stretch reads MVLPFMIVFLLISSLLNFAYI. At 148 to 179 the chain is on the extracellular side; it reads AKILNDYKMKNDTVWDLNMYKSEYFIKQILLN. An N-linked (GlcNAc...) asparagine glycan is attached at asparagine 158. Residues 180–200 form a helical membrane-spanning segment; that stretch reads LGVIFFFTLSLITCVLLIISL. At 201–227 the chain is on the cytoplasmic side; sequence WRHNRQMQSNVTGLRDSNTEAHVKAMK. A helical membrane pass occupies residues 228 to 248; it reads VLISFIILFILYFIGMAIEIS. Topologically, residues 249–257 are extracellular; that stretch reads YFTVRENKL. The chain crosses the membrane as a helical span at residues 258 to 278; it reads LLMFGMTTTAIYPWGHSFILI. The Cytoplasmic portion of the chain corresponds to 279-307; that stretch reads LGNSKLKQASLRVLQQLKCCEKRKNLRVT.

This sequence belongs to the G-protein coupled receptor T2R family.

Its subcellular location is the membrane. Functionally, receptor that may play a role in the perception of bitterness and is gustducin-linked. May play a role in sensing the chemical composition of the gastrointestinal content. The activity of this receptor may stimulate alpha gustducin, mediate PLC-beta-2 activation and lead to the gating of TRPM5. The chain is Taste receptor type 2 member 10 (TAS2R10) from Pan paniscus (Pygmy chimpanzee).